The chain runs to 485 residues: uncharacterized protein (485 aa).

Topologically, residues 1-30 (MFSWANIGSNEYLPLKNDRKAYLNQWAKRS) are cytoplasmic. The chain crosses the membrane as a helical span at residues 31-51 (GLAIAAICILGILILAIVKLF). Residues 52-485 (CFKAIIFPIV…DIEQAYSKLI (434 aa)) are Extracellular-facing. Asn-67 carries an N-linked (GlcNAc...) asparagine glycan. Residues 74–404 (STVIVISLDG…YEPLGVHGYD (331 aa)) form a phosphodiesterase region. Thr-118 functions as the Nucleophile in the catalytic mechanism. Asn-306, Asn-338, Asn-453, and Asn-467 each carry an N-linked (GlcNAc...) asparagine glycan.

The protein belongs to the nucleotide pyrophosphatase/phosphodiesterase family.

The protein resides in the membrane. This is an uncharacterized protein from Schizosaccharomyces pombe (strain 972 / ATCC 24843) (Fission yeast).